The primary structure comprises 233 residues: AA9 family lytic polysaccharide monooxygenase A (233 aa).

Positions 1–17 are cleaved as a signal peptide; that stretch reads MKLTTSVALLAAAGAQA. Cu(2+)-binding residues include histidine 18 and histidine 90. 2 cysteine pairs are disulfide-bonded: cysteine 59/cysteine 180 and cysteine 150/cysteine 233. An N-linked (GlcNAc...) asparagine glycan is attached at asparagine 132. Residues histidine 166 and glutamine 175 each coordinate O2. Tyrosine 177 provides a ligand contact to Cu(2+).

It belongs to the polysaccharide monooxygenase AA9 family. It depends on Cu(2+) as a cofactor.

It localises to the secreted. It catalyses the reaction [(1-&gt;4)-beta-D-glucosyl]n+m + reduced acceptor + O2 = 4-dehydro-beta-D-glucosyl-[(1-&gt;4)-beta-D-glucosyl]n-1 + [(1-&gt;4)-beta-D-glucosyl]m + acceptor + H2O.. Its function is as follows. Lytic polysaccharide monooxygenase (LPMO) that depolymerizes crystalline and amorphous polysaccharides via the oxidation of scissile alpha- or beta-(1-4)-glycosidic bonds, yielding C1 and C4 oxidation products. Catalysis by LPMOs requires the reduction of the active-site copper from Cu(II) to Cu(I) by a reducing agent and H(2)O(2) or O(2) as a cosubstrate. Shows endoglucanase activity on tamarind xyloglucan, as well as on beechwood xylan when combined with phosphoric acid swollen cellulose (PASC). Shows no activity on wheat arabinoxylan, konjac glucomannan, acetylated spruce galactoglucomannan, or cellopentaose. The polypeptide is AA9 family lytic polysaccharide monooxygenase A (Thermothielavioides terrestris (strain ATCC 38088 / NRRL 8126) (Thielavia terrestris)).